A 101-amino-acid polypeptide reads, in one-letter code: Small ribosomal subunit protein bS18c (101 aa).

The segment covering 1–19 (MDKSKRPFRKSKRSFRRRL) has biased composition (basic residues). The segment at 1–23 (MDKSKRPFRKSKRSFRRRLPPIG) is disordered.

Belongs to the bacterial ribosomal protein bS18 family. Part of the 30S ribosomal subunit.

It localises to the plastid. It is found in the chloroplast. This Ceratophyllum demersum (Rigid hornwort) protein is Small ribosomal subunit protein bS18c.